We begin with the raw amino-acid sequence, 36 residues long: Protein P4 (36 aa).

A helical transmembrane segment spans residues 13–33 (GLQLSLLICACLLAVLIVSFC).

It is found in the host membrane. The protein is Protein P4 of Vitis vinifera (Grape).